A 244-amino-acid chain; its full sequence is Phosphoadenosine 5'-phosphosulfate reductase (244 aa).

C239 (nucleophile; cysteine thiosulfonate intermediate) is an active-site residue.

It belongs to the PAPS reductase family. CysH subfamily.

The protein localises to the cytoplasm. The catalysed reaction is [thioredoxin]-disulfide + sulfite + adenosine 3',5'-bisphosphate + 2 H(+) = [thioredoxin]-dithiol + 3'-phosphoadenylyl sulfate. Its pathway is sulfur metabolism; hydrogen sulfide biosynthesis; sulfite from sulfate: step 3/3. Catalyzes the formation of sulfite from phosphoadenosine 5'-phosphosulfate (PAPS) using thioredoxin as an electron donor. In Salmonella dublin (strain CT_02021853), this protein is Phosphoadenosine 5'-phosphosulfate reductase.